The following is a 472-amino-acid chain: Tryptophanase (472 aa).

Residue K270 is modified to N6-(pyridoxal phosphate)lysine.

Belongs to the beta-eliminating lyase family. Homotetramer. Requires pyridoxal 5'-phosphate as cofactor.

The enzyme catalyses L-tryptophan + H2O = indole + pyruvate + NH4(+). It participates in amino-acid degradation; L-tryptophan degradation via pyruvate pathway; indole and pyruvate from L-tryptophan: step 1/1. The polypeptide is Tryptophanase (tnaA) (Haemophilus influenzae).